We begin with the raw amino-acid sequence, 80 residues long: Small ribosomal subunit protein uS17 (80 aa).

The protein belongs to the universal ribosomal protein uS17 family. Part of the 30S ribosomal subunit.

In terms of biological role, one of the primary rRNA binding proteins, it binds specifically to the 5'-end of 16S ribosomal RNA. The chain is Small ribosomal subunit protein uS17 from Cereibacter sphaeroides (strain ATCC 17025 / ATH 2.4.3) (Rhodobacter sphaeroides).